Reading from the N-terminus, the 354-residue chain is Probable L-ascorbate-6-phosphate lactonase UlaG (354 aa).

This sequence belongs to the UlaG family. The cofactor is a divalent metal cation.

Its subcellular location is the cytoplasm. The enzyme catalyses L-ascorbate 6-phosphate + H2O = 3-dehydro-L-gulonate 6-phosphate. Its pathway is cofactor degradation; L-ascorbate degradation; D-xylulose 5-phosphate from L-ascorbate: step 1/4. In terms of biological role, probably catalyzes the hydrolysis of L-ascorbate-6-P into 3-keto-L-gulonate-6-P. Is essential for L-ascorbate utilization under anaerobic conditions. The polypeptide is Probable L-ascorbate-6-phosphate lactonase UlaG (Escherichia fergusonii (strain ATCC 35469 / DSM 13698 / CCUG 18766 / IAM 14443 / JCM 21226 / LMG 7866 / NBRC 102419 / NCTC 12128 / CDC 0568-73)).